A 71-amino-acid polypeptide reads, in one-letter code: DNA-directed RNA polymerase subunit omega (71 aa).

The protein belongs to the RNA polymerase subunit omega family. As to quaternary structure, the RNAP catalytic core consists of 2 alpha, 1 beta, 1 beta' and 1 omega subunit. When a sigma factor is associated with the core the holoenzyme is formed, which can initiate transcription.

It carries out the reaction RNA(n) + a ribonucleoside 5'-triphosphate = RNA(n+1) + diphosphate. In terms of biological role, promotes RNA polymerase assembly. Latches the N- and C-terminal regions of the beta' subunit thereby facilitating its interaction with the beta and alpha subunits. In Aromatoleum aromaticum (strain DSM 19018 / LMG 30748 / EbN1) (Azoarcus sp. (strain EbN1)), this protein is DNA-directed RNA polymerase subunit omega.